The chain runs to 473 residues: ATP synthase subunit beta (473 aa).

158-165 contacts ATP; it reads GGAGVGKT.

Belongs to the ATPase alpha/beta chains family. F-type ATPases have 2 components, CF(1) - the catalytic core - and CF(0) - the membrane proton channel. CF(1) has five subunits: alpha(3), beta(3), gamma(1), delta(1), epsilon(1). CF(0) has three main subunits: a(1), b(2) and c(9-12). The alpha and beta chains form an alternating ring which encloses part of the gamma chain. CF(1) is attached to CF(0) by a central stalk formed by the gamma and epsilon chains, while a peripheral stalk is formed by the delta and b chains.

The protein resides in the cell membrane. It carries out the reaction ATP + H2O + 4 H(+)(in) = ADP + phosphate + 5 H(+)(out). Functionally, produces ATP from ADP in the presence of a proton gradient across the membrane. The catalytic sites are hosted primarily by the beta subunits. This is ATP synthase subunit beta from Carboxydothermus hydrogenoformans (strain ATCC BAA-161 / DSM 6008 / Z-2901).